Reading from the N-terminus, the 633-residue chain is UvrABC system protein C (633 aa).

Residues 37-115 (PKPGVYRMFG…IKSLKPRFNI (79 aa)) form the GIY-YIG domain. One can recognise a UVR domain in the interval 225-260 (NALREDLQTRMAQASEAMDFETAAKLRDRIRAIAAV).

It belongs to the UvrC family. As to quaternary structure, interacts with UvrB in an incision complex.

It localises to the cytoplasm. The UvrABC repair system catalyzes the recognition and processing of DNA lesions. UvrC both incises the 5' and 3' sides of the lesion. The N-terminal half is responsible for the 3' incision and the C-terminal half is responsible for the 5' incision. The protein is UvrABC system protein C of Maricaulis maris (strain MCS10) (Caulobacter maris).